Here is a 157-residue protein sequence, read N- to C-terminus: MPDSAEETISDMASVILSGTVLAFDFGVRRIGVAIGEYELRLAHPLMTIDQAMTKPRFEKIAELIETWQPVLLVVGLSVHADGAEHEITRLCQRFARRLEGRFGIPVVMEDERYTTAIARLTLEEVGITGRKQRPMLDQIAAQHILQTFFDSSHAAS.

The protein belongs to the YqgF nuclease family.

The protein localises to the cytoplasm. Could be a nuclease involved in processing of the 5'-end of pre-16S rRNA. In Nitrosomonas eutropha (strain DSM 101675 / C91 / Nm57), this protein is Putative pre-16S rRNA nuclease.